Reading from the N-terminus, the 792-residue chain is Probable exo-1,4-beta-xylosidase xlnD (792 aa).

Residues 1–20 form the signal peptide; the sequence is MSVAKSIAAVLVALLPGALA. 5 N-linked (GlcNAc...) asparagine glycosylation sites follow: Asn-23, Asn-87, Asn-118, Asn-142, and Asn-246. The active site involves Asp-310. Asn-326, Asn-385, Asn-404, Asn-440, Asn-477, Asn-518, Asn-679, and Asn-701 each carry an N-linked (GlcNAc...) asparagine glycan.

It belongs to the glycosyl hydrolase 3 family.

It localises to the secreted. The catalysed reaction is Hydrolysis of (1-&gt;4)-beta-D-xylans, to remove successive D-xylose residues from the non-reducing termini.. The protein operates within glycan degradation; xylan degradation. Xylan 1,4-beta-xylosidase involved in the hydrolysis of xylan, a major structural heterogeneous polysaccharide found in plant biomass representing the second most abundant polysaccharide in the biosphere, after cellulose. This is Probable exo-1,4-beta-xylosidase xlnD (xlnD) from Aspergillus fumigatus (strain ATCC MYA-4609 / CBS 101355 / FGSC A1100 / Af293) (Neosartorya fumigata).